We begin with the raw amino-acid sequence, 445 residues long: Phosphoglucosamine mutase (445 aa).

Catalysis depends on serine 102, which acts as the Phosphoserine intermediate. Mg(2+) is bound by residues serine 102, aspartate 241, aspartate 243, and aspartate 245. Serine 102 carries the post-translational modification Phosphoserine.

It belongs to the phosphohexose mutase family. The cofactor is Mg(2+). Activated by phosphorylation.

It catalyses the reaction alpha-D-glucosamine 1-phosphate = D-glucosamine 6-phosphate. Catalyzes the conversion of glucosamine-6-phosphate to glucosamine-1-phosphate. In Shigella dysenteriae serotype 1 (strain Sd197), this protein is Phosphoglucosamine mutase.